The following is a 323-amino-acid chain: tRNA dimethylallyltransferase (323 aa).

Residue 32–39 participates in ATP binding; that stretch reads GPTASGKS. 34–39 provides a ligand contact to substrate; sequence TASGKS. An interaction with substrate tRNA region spans residues 57 to 60; that stretch reads DSMQ.

The protein belongs to the IPP transferase family. Monomer. It depends on Mg(2+) as a cofactor.

The enzyme catalyses adenosine(37) in tRNA + dimethylallyl diphosphate = N(6)-dimethylallyladenosine(37) in tRNA + diphosphate. Its function is as follows. Catalyzes the transfer of a dimethylallyl group onto the adenine at position 37 in tRNAs that read codons beginning with uridine, leading to the formation of N6-(dimethylallyl)adenosine (i(6)A). In Rhodopseudomonas palustris (strain BisB5), this protein is tRNA dimethylallyltransferase.